The chain runs to 411 residues: Putative metal tolerance protein C3 (411 aa).

The Cytoplasmic portion of the chain corresponds to 1-115 (MEVNYCPETP…DRAERAAQEL (115 aa)). The helical transmembrane segment at 116–136 (AMQISNWANIFLLALKIYATV) threads the bilayer. Residues 137 to 140 (KSGS) lie on the Vacuolar side of the membrane. Residues 141 to 161 (IAIAASTLDSLLDLMAGGILW) traverse the membrane as a helical segment. Topologically, residues 162–184 (FTHLSMKNVNIYKYPIGKLRVQP) are cytoplasmic. The helical transmembrane segment at 185 to 205 (VGIIIFAAVMATLGFQVLLVA) threads the bilayer. Residues 206–222 (AEQLISNEPSEKMNHVQ) lie on the Vacuolar side of the membrane. A helical transmembrane segment spans residues 223 to 243 (LIWLYSIMLSATAIKLVLWIY). Residues 244–262 (CKSSRNHIVRAYAKDHHFD) lie on the Cytoplasmic side of the membrane. The chain crosses the membrane as a helical span at residues 263–283 (VVTNVLGLVAAVLANAFYWWL). Topologically, residues 284–287 (DPTG) are vacuolar. Residues 288–308 (AILLAIYTIVNWSGTVMENAV) traverse the membrane as a helical segment. At 309-390 (SLIGQSAPPE…LPEVERAFVH (82 aa)) the chain is on the cytoplasmic side.

Belongs to the cation diffusion facilitator (CDF) transporter (TC 2.A.4) family.

It is found in the vacuole membrane. Involved in sequestration of excess metal in the cytoplasm into vacuoles to maintain metal homeostasis. The protein is Putative metal tolerance protein C3 (MTPC3) of Arabidopsis thaliana (Mouse-ear cress).